Reading from the N-terminus, the 184-residue chain is V-type proton ATPase subunit E (184 aa).

Belongs to the V-ATPase E subunit family.

Functionally, produces ATP from ADP in the presence of a proton gradient across the membrane. This is V-type proton ATPase subunit E from Finegoldia magna (strain ATCC 29328 / DSM 20472 / WAL 2508) (Peptostreptococcus magnus).